A 405-amino-acid polypeptide reads, in one-letter code: MADVKKVVLAYSGGLDTSVILKWLQDTYNCEVVTFTADLGQGEEVEPARAKAQALGVKEIYIDDLREEFVRDFVFPMFRANTVYEGEYLLGTSIARPLIAKRLIEIANETGADAISHGATGKGNDQVRFELGAYALKPGVKVIAPWREWDLLSREKLMDYAEKHAIPIERHGKKKSPYSMDANLLHISYEGGVLEDTWTEHEEDMWRWTKSPEAAPDTPTYIELTYRKGDIVAIDGKDMTPAQVLAELNRIGGENGIGRLDIVENRYVGMKSRGCYETPGGTIMLKAHRAIESITLDREVAHLKDELMPKYASLIYNGYWWSPERSMLQQMIDASQVNVNGVVRLKLYKGNVIVVGRKSDDSLFDANIATFEEDGGAYNQADAGGFIKLNALRMRIAAGKGRTQF.

ATP contacts are provided by residues 10–18 (AYSGGLDTS) and A37. L-citrulline contacts are provided by Y88 and S93. Position 118 (G118) interacts with ATP. L-aspartate is bound by residues T120, N124, and D125. Residue N124 coordinates L-citrulline. L-citrulline contacts are provided by R128, S179, S188, E264, and Y276.

It belongs to the argininosuccinate synthase family. Type 1 subfamily. As to quaternary structure, homotetramer.

It is found in the cytoplasm. It carries out the reaction L-citrulline + L-aspartate + ATP = 2-(N(omega)-L-arginino)succinate + AMP + diphosphate + H(+). It functions in the pathway amino-acid biosynthesis; L-arginine biosynthesis; L-arginine from L-ornithine and carbamoyl phosphate: step 2/3. This is Argininosuccinate synthase from Stutzerimonas stutzeri (strain A1501) (Pseudomonas stutzeri).